The chain runs to 525 residues: Light-independent protochlorophyllide reductase subunit B (525 aa).

Aspartate 36 is a [4Fe-4S] cluster binding site. Aspartate 292 acts as the Proton donor in catalysis. 428–429 (GL) contacts substrate. The interval 447-470 (PSASSENGSAPLSAGTATPAAAPE) is disordered. Residues 460–470 (AGTATPAAAPE) show a composition bias toward low complexity.

This sequence belongs to the ChlB/BchB/BchZ family. In terms of assembly, protochlorophyllide reductase is composed of three subunits; BchL, BchN and BchB. Forms a heterotetramer of two BchB and two BchN subunits. [4Fe-4S] cluster is required as a cofactor.

The enzyme catalyses chlorophyllide a + oxidized 2[4Fe-4S]-[ferredoxin] + 2 ADP + 2 phosphate = protochlorophyllide a + reduced 2[4Fe-4S]-[ferredoxin] + 2 ATP + 2 H2O. It participates in porphyrin-containing compound metabolism; bacteriochlorophyll biosynthesis (light-independent). Functionally, component of the dark-operative protochlorophyllide reductase (DPOR) that uses Mg-ATP and reduced ferredoxin to reduce ring D of protochlorophyllide (Pchlide) to form chlorophyllide a (Chlide). This reaction is light-independent. The NB-protein (BchN-BchB) is the catalytic component of the complex. The polypeptide is Light-independent protochlorophyllide reductase subunit B (Chlorobium luteolum (strain DSM 273 / BCRC 81028 / 2530) (Pelodictyon luteolum)).